A 345-amino-acid polypeptide reads, in one-letter code: KH domain-containing, RNA-binding, signal transduction-associated protein 2 (345 aa).

Residues 65-131 form the KH domain; the sequence is LIPVKQYPKF…AKHAHLSDEL (67 aa). Disordered stretches follow at residues 178-224 and 321-345; these read LNGS…TRGA and SRST…YGRY. Residues 336 to 345 are compositionally biased toward basic and acidic residues; sequence GYREHPYGRY.

The protein belongs to the KHDRBS family.

The protein resides in the nucleus. In terms of biological role, RNA-binding protein that plays a role in the regulation of alternative splicing. This chain is KH domain-containing, RNA-binding, signal transduction-associated protein 2 (khdrbs2), found in Xenopus tropicalis (Western clawed frog).